The sequence spans 436 residues: Trigger factor (436 aa).

The region spanning 161–246 (EDQLNIDFVG…VNTVSEPKLP (86 aa)) is the PPIase FKBP-type domain.

It belongs to the FKBP-type PPIase family. Tig subfamily.

The protein localises to the cytoplasm. The enzyme catalyses [protein]-peptidylproline (omega=180) = [protein]-peptidylproline (omega=0). Functionally, involved in protein export. Acts as a chaperone by maintaining the newly synthesized protein in an open conformation. Functions as a peptidyl-prolyl cis-trans isomerase. The polypeptide is Trigger factor (Pseudomonas syringae pv. syringae (strain B728a)).